The chain runs to 358 residues: MPSRTQNIQSAWIGTTDGGSRLAHDAPIPAIARERVLIKTKAVSVSPVDSKLVGPYVTPNAVAGFDFSGIVEELGPEATKCGLKVGDRVCSAVVGMNPADPTIGAFAEYTAAVEWILLKLPPSITFEQGATLGISFLTSGLALFRSLGIPGRPLEPAPKPLCILVYGGSSSCGTASLQLLREAGHIPITTCSPHNFELVKSYGAVDAFDYNDPDTMDKIKKYTKNGLRYALDCISTTSSMQFCYKVIGRAGGKYTSLEPFSAAVAQTRKVVSPDWVMGPSLLGQEVAWPEPHYRKQDDDLAQFGAEWTATLNQLLKKELIKPHPMQIRDGGLENIQQGLEDLRAKKVSGAKIVYPLGS.

An NADP(+)-binding site is contributed by 48 to 51 (VDSK). 134–141 (ISFLTSGL) lines the substrate pocket. Residues 169–172 (SSSC), 192–195 (SPHN), Tyr210, and 257–258 (LE) contribute to the NADP(+) site. Substrate is bound at residue 278-282 (GPSLL). 347–348 (VS) is an NADP(+) binding site.

Belongs to the zinc-containing alcohol dehydrogenase family. Monomer.

It functions in the pathway secondary metabolite biosynthesis. In terms of biological role, trans-enoyl reductase; part of the gene cluster that mediates the biosynthesis of varicidin A, an antifungal natural product containing a cis-octahydrodecalin core. The PKS module of pvhA together with the enoylreductase pvhC catalyze the formation of the polyketide unit which is then conjugated to L-isoleucine by the condensation domain of the NRPS module. Activity of the Dieckmann cyclase domain (RED) of pvhA results in release of an acyclic tetramate. The cytochrome P450 monooxygenase pvhE then catalyzes the oxidation of the C21 methyl group to a to carboxylate group. The methyltransferase pvhD then further methylates the pvhE product. The Diels-Alderase pvhB is able to catalyze Diels-Alder cycloaddition using both pvhE and pvhD products as substrates to form the decalin ring, yielding varicidin B and A, respectively. This is Trans-enoyl reductase pvhC from Talaromyces variabilis (Penicillium variabile).